The sequence spans 389 residues: tRNA pseudouridine synthase Pus10 (389 aa).

The Nucleophile role is filled by D213. Substrate-binding residues include Y278 and Y350.

This sequence belongs to the pseudouridine synthase Pus10 family.

The catalysed reaction is uridine(54) in tRNA = pseudouridine(54) in tRNA. It catalyses the reaction uridine(55) in tRNA = pseudouridine(55) in tRNA. Functionally, responsible for synthesis of pseudouridine from uracil-54 and uracil-55 in the psi GC loop of transfer RNAs. In Thermoplasma acidophilum (strain ATCC 25905 / DSM 1728 / JCM 9062 / NBRC 15155 / AMRC-C165), this protein is tRNA pseudouridine synthase Pus10.